Consider the following 264-residue polypeptide: NAD kinase 1 (264 aa).

D45 functions as the Proton acceptor in the catalytic mechanism. NAD(+)-binding positions include 45–46 (DG), 122–123 (NE), R148, D150, 161–166 (TAYNKS), and A185.

This sequence belongs to the NAD kinase family. A divalent metal cation serves as cofactor.

The protein resides in the cytoplasm. The enzyme catalyses NAD(+) + ATP = ADP + NADP(+) + H(+). In terms of biological role, involved in the regulation of the intracellular balance of NAD and NADP, and is a key enzyme in the biosynthesis of NADP. Catalyzes specifically the phosphorylation on 2'-hydroxyl of the adenosine moiety of NAD to yield NADP. This Listeria monocytogenes serotype 4b (strain F2365) protein is NAD kinase 1.